A 191-amino-acid polypeptide reads, in one-letter code: MSNINVIDILKESDALLEGHFLLSSGRHSNRYCQCAKLLQCPQKAEKVISVIAEKLKEVDFNIIVGPAMGGVIVSYELARQTNKPGIFAERKEEVMCIRRGFEIKKGDKVIISEDVVTTGKSSLEVAKVIEEMGGEVVGIACIVDRRAEDIKTNYPIYSACKLEIETYEKDNCELCKKNIPFVKPGSREQK.

114–122 serves as a coordination point for 5-phospho-alpha-D-ribose 1-diphosphate; that stretch reads EDVVTTGKS. Thr118 and Arg146 together coordinate orotate.

The protein belongs to the purine/pyrimidine phosphoribosyltransferase family. PyrE subfamily. In terms of assembly, homodimer. Requires Mg(2+) as cofactor.

The catalysed reaction is orotidine 5'-phosphate + diphosphate = orotate + 5-phospho-alpha-D-ribose 1-diphosphate. Its pathway is pyrimidine metabolism; UMP biosynthesis via de novo pathway; UMP from orotate: step 1/2. Its function is as follows. Catalyzes the transfer of a ribosyl phosphate group from 5-phosphoribose 1-diphosphate to orotate, leading to the formation of orotidine monophosphate (OMP). This Clostridium botulinum (strain Kyoto / Type A2) protein is Orotate phosphoribosyltransferase.